Reading from the N-terminus, the 475-residue chain is Bifunctional purple acid phosphatase 26 (475 aa).

Positions 1–30 (MNHLVIISVFLSSVLLLYRGESGITSSFIR) are cleaved as a signal peptide. The N-linked (GlcNAc...) asparagine glycan is linked to Asn-103. Positions 162, 189, and 192 each coordinate Fe cation. Asp-189 contacts Zn(2+). The Zn(2+) site is built by Asn-227 and His-312. Asn-227 contacts substrate. His-322 acts as the Proton donor in catalysis. His-349 is a Zn(2+) binding site. A substrate-binding site is contributed by 349 to 351 (HVH). His-351 is a Fe cation binding site. Residues Asn-365 and Asn-422 are each glycosylated (N-linked (GlcNAc...) asparagine).

Belongs to the metallophosphoesterase superfamily. Purple acid phosphatase family. Homodimer. Fe cation is required as a cofactor. The cofactor is Zn(2+). Glycosylated. In terms of tissue distribution, expressed in roots, stems, leaves, flowers and siliques.

Its subcellular location is the vacuole. It carries out the reaction a phosphate monoester + H2O = an alcohol + phosphate. The enzyme catalyses 2 a phenolic donor + H2O2 = 2 a phenolic radical donor + 2 H2O. Activated by Mg(2+), Co(2+), Mn(2+) and Ba(2+). Inhibited by Fe(2+), Cu(2+), Zn(2+), NaF, molybdate, arsenate, vanadate and inorganic phosphate. No effect of tartrate, Asp, Gln, glutathione, Asn, ascorbic acid and phosphite. In terms of biological role, metallo-phosphoesterase involved in phosphate metabolism. Acid phosphatase activity with phosphoenolpyruvate, inorganic pyrophosphate, phenyl-phosphate and p-nitrophenyl-phosphate as the most effective substrates. No activity with phytic acid, phosphocholine or bis-p-nitrophenyl-phosphate. Has a peroxidase activity at alkaline pH. In Arabidopsis thaliana (Mouse-ear cress), this protein is Bifunctional purple acid phosphatase 26 (PAP26).